Consider the following 102-residue polypeptide: Large ribosomal subunit protein bL21 (102 aa).

Belongs to the bacterial ribosomal protein bL21 family. In terms of assembly, part of the 50S ribosomal subunit. Contacts protein L20.

This protein binds to 23S rRNA in the presence of protein L20. The chain is Large ribosomal subunit protein bL21 from Exiguobacterium sp. (strain ATCC BAA-1283 / AT1b).